Here is a 257-residue protein sequence, read N- to C-terminus: MKRFILILQFLTRIPIKLNVGFDDEFYKSIVYFPLVGFVIGILSYLIGWISMLLFEPFIASIIITLAGVLITGGLHIDGLGDTFDAIYSYRDKEKMLEIMKDSRLGTNSLLAIMFVLLLKVGFVYDIISNNSLWVIIFMPMIARLGVMLLTYKTVTPREKGMGNLFIGKLTTSMLITAIIYTLLIVALITKFIFLLPNIVLIKVLGSIIVVFVFIILFKKHIYKKIDGVTGDILGCGIELSELVYLIYIYLLIFMFF.

A run of 7 helical transmembrane segments spans residues 30 to 50 (IVYFPLVGFVIGILSYLIGWI), 52 to 72 (MLLFEPFIASIIITLAGVLIT), 109 to 129 (SLLAIMFVLLLKVGFVYDIIS), 132 to 152 (SLWVIIFMPMIARLGVMLLTY), 175 to 195 (LITAIIYTLLIVALITKFIFL), 198 to 218 (NIVLIKVLGSIIVVFVFIILF), and 237 to 257 (GIELSELVYLIYIYLLIFMFF).

It belongs to the CobS family. Requires Mg(2+) as cofactor.

Its subcellular location is the cell membrane. The catalysed reaction is alpha-ribazole + adenosylcob(III)inamide-GDP = adenosylcob(III)alamin + GMP + H(+). It catalyses the reaction alpha-ribazole 5'-phosphate + adenosylcob(III)inamide-GDP = adenosylcob(III)alamin 5'-phosphate + GMP + H(+). It participates in cofactor biosynthesis; adenosylcobalamin biosynthesis; adenosylcobalamin from cob(II)yrinate a,c-diamide: step 7/7. Its function is as follows. Joins adenosylcobinamide-GDP and alpha-ribazole to generate adenosylcobalamin (Ado-cobalamin). Also synthesizes adenosylcobalamin 5'-phosphate from adenosylcobinamide-GDP and alpha-ribazole 5'-phosphate. This chain is Adenosylcobinamide-GDP ribazoletransferase, found in Clostridioides difficile (strain 630) (Peptoclostridium difficile).